A 341-amino-acid polypeptide reads, in one-letter code: HTH-type transcriptional repressor PurR (341 aa).

Positions 2 to 56 (ATIKDVAKRAGVSTTTVSHVINKTRFVAEETKAAVRAAIKELHYSPSAVARSLKV) constitute an HTH lacI-type domain. The H-T-H motif DNA-binding region spans 4–23 (IKDVAKRAGVSTTTVSHVIN). The DNA-binding element occupies 48-56 (SAVARSLKV). Hypoxanthine contacts are provided by Tyr73, Arg190, Thr192, Phe221, and Asp275.

As to quaternary structure, homodimer.

The protein operates within purine metabolism; purine nucleotide biosynthesis [regulation]. Functionally, is the main repressor of the genes involved in the de novo synthesis of purine nucleotides, regulating purB, purC, purEK, purF, purHD, purL, purMN and guaBA expression. PurR is allosterically activated to bind its cognate DNA by binding the purine corepressors, hypoxanthine or guanine, thereby effecting transcription repression. The protein is HTH-type transcriptional repressor PurR of Pectobacterium atrosepticum (strain SCRI 1043 / ATCC BAA-672) (Erwinia carotovora subsp. atroseptica).